Reading from the N-terminus, the 787-residue chain is Transcription factor SOX-6 (787 aa).

The interval 1–46 is disordered; sequence MSSKQATSPFACAADGEDAMTQDLTSREKEEGSDQHVASHLPLHPI. Positions 25-34 are enriched in basic and acidic residues; that stretch reads TSREKEEGSD. Thr119 is modified (phosphothreonine). The stretch at 184-262 forms a coiled coil; the sequence is LAEKERQLST…LLQQQIQVQG (79 aa). The segment at 340–429 is disordered; it reads PGAKMPSTPQ…KSSIPSPIGG (90 aa). Positions 352 to 361 are enriched in polar residues; the sequence is NTAGTVSPTG. At Ser358 the chain carries Phosphoserine. Phosphothreonine is present on Thr360. Glycyl lysine isopeptide (Lys-Gly) (interchain with G-Cter in SUMO) cross-links involve residues Lys363 and Lys376. Phosphoserine occurs at positions 398 and 401. Residues 398–420 are compositionally biased toward polar residues; that stretch reads SPTSPTQNLFPASKTSPVNLPNK. Residues 580-648 constitute a DNA-binding region (HMG box); that stretch reads IKRPMNAFMV…IHLEKYPNYK (69 aa). Residues 712–740 show a composition bias toward polar residues; it reads TPSPQMTSDCSSTSASPEPSLPVIQSTYG. The interval 712-787 is disordered; sequence TPSPQMTSDC…NEAPEAVSAN (76 aa). Positions 755–768 are enriched in acidic residues; it reads NGEDEMEMYDDYED.

Homodimer. Interacts with DAZAP2. May interact with CENPK. Post-translationally, sumoylation inhibits the transcriptional activity.

The protein resides in the nucleus. It localises to the cytoplasm. In terms of biological role, transcription factor that plays a key role in several developmental processes, including neurogenesis, chondrocytes differentiation and cartilage formation. Specifically binds the 5'-AACAAT-3' DNA motif present in enhancers and super-enhancers and promotes expression of genes important for chondrogenesis. Required for overt chondrogenesis when condensed prechondrocytes differentiate into early stage chondrocytes: SOX5 and SOX6 cooperatively bind with SOX9 on active enhancers and super-enhancers associated with cartilage-specific genes, and thereby potentiate SOX9's ability to transactivate. Not involved in precartilaginous condensation, the first step in chondrogenesis, during which skeletal progenitors differentiate into prechondrocytes. Together with SOX5, required to form and maintain a pool of highly proliferating chondroblasts between epiphyses and metaphyses, to form columnar chondroblasts, delay chondrocyte prehypertrophy but promote hypertrophy, and to delay terminal differentiation of chondrocytes on contact with ossification fronts. Binds to the proximal promoter region of the myelin protein MPZ gene, and is thereby involved in the differentiation of oligodendroglia in the developing spinal tube. Binds to the gene promoter of MBP and acts as a transcriptional repressor. The protein is Transcription factor SOX-6 of Pongo abelii (Sumatran orangutan).